We begin with the raw amino-acid sequence, 435 residues long: tRNA-2-methylthio-N(6)-dimethylallyladenosine synthase (435 aa).

The MTTase N-terminal domain maps to 2–117 (KKASIITYGC…IPQAIEKIEN (116 aa)). Positions 11, 47, 80, 154, 158, and 161 each coordinate [4Fe-4S] cluster. One can recognise a Radical SAM core domain in the interval 140–370 (FGSDQTASIS…MEVQNKCSFY (231 aa)). The region spanning 373–435 (SKYKGRIVKV…KTWTLYGEIV (63 aa)) is the TRAM domain.

It belongs to the methylthiotransferase family. MiaB subfamily. As to quaternary structure, monomer. The cofactor is [4Fe-4S] cluster.

The protein localises to the cytoplasm. The enzyme catalyses N(6)-dimethylallyladenosine(37) in tRNA + (sulfur carrier)-SH + AH2 + 2 S-adenosyl-L-methionine = 2-methylsulfanyl-N(6)-dimethylallyladenosine(37) in tRNA + (sulfur carrier)-H + 5'-deoxyadenosine + L-methionine + A + S-adenosyl-L-homocysteine + 2 H(+). In terms of biological role, catalyzes the methylthiolation of N6-(dimethylallyl)adenosine (i(6)A), leading to the formation of 2-methylthio-N6-(dimethylallyl)adenosine (ms(2)i(6)A) at position 37 in tRNAs that read codons beginning with uridine. The chain is tRNA-2-methylthio-N(6)-dimethylallyladenosine synthase from Fusobacterium nucleatum subsp. nucleatum (strain ATCC 25586 / DSM 15643 / BCRC 10681 / CIP 101130 / JCM 8532 / KCTC 2640 / LMG 13131 / VPI 4355).